The chain runs to 605 residues: MDPAEAVLQEKALKFMCSMPRSLWLGCSSLADSMPSLRCLYNPGTGALTAFQNSSEREDCNNGEPPRKIIPEKNSLRQTYNSCARLCINQETVCLTSTAMKTENCVAKAKLANGTSSMIVPKQRKLSASYEKEKELCVKYFEQWSESDQVEFVEHLISQMCHYQHGHINSYLKPMLQRDFITALPARGLDHIAENILSYLDAKSLCAAELVCKEWYRVTSDGMLWKKLIERMVRTDSLWRGLAERRGWGQYLFKNKPPDENAPPNSFYRALYPKIIQDIETIESNWRCGRHSLQRIHCRSETSKGVYCLQYDDQKIVSGLRDNTIKIWDKSTLECKRILTGHTGSVLCLQYDERVIITGSSDSTVRVWDVNAGEMLNTLIHHCEAVLHLRFNNGMMVTCSKDRSIAVWDMASPTDITLRRVLVGHRAAVNVVDFDDKYIVSASGDRTIKVWNTSTCEFVRTLNGHKRGIACLQYRDRLVVSGSSDNTIRLWDIECGACLRVLEGHEELVRCIRFDNKRIVSGAYDGKIKVWDLMAALDPRAPAGTLCLRTLVEHSGRVFRLQFDEFQIVSSSHDDTILIWDFLNDPAAHAEPPRSPSRTYTYISR.

The interval 128-177 is homodimerization domain D; that stretch reads ASYEKEKELCVKYFEQWSESDQVEFVEHLISQMCHYQHGHINSYLKPMLQ. The F-box domain maps to 182–228; that stretch reads TALPARGLDHIAENILSYLDAKSLCAAELVCKEWYRVTSDGMLWKKL. A required for down-regulation of SNAI1 region spans residues 190 to 228; the sequence is DHIAENILSYLDAKSLCAAELVCKEWYRVTSDGMLWKKL. 7 WD repeats span residues 301-338, 341-378, 381-418, 424-461, 464-503, 505-541, and 553-590; these read ETSKGVYCLQYDDQKIVSGLRDNTIKIWDKSTLECKRI, GHTGSVLCLQYDERVIITGSSDSTVRVWDVNAGEMLNT, HHCEAVLHLRFNNGMMVTCSKDRSIAVWDMASPTDITL, GHRAAVNVVDFDDKYIVSASGDRTIKVWNTSTCEFVRT, GHKRGIACLQYRDRLVVSGSSDNTIRLWDIECGACLRVLE, HEELVRCIRFDNKRIVSGAYDGKIKVWDLMAALDPRA, and EHSGRVFRLQFDEFQIVSSSHDDTILIWDFLNDPAAHA.

Homodimer. Self-associates. Component of the SCF(BTRC) complex, composed of SKP1, CUL1 and BTRC. Direct interaction with SKP1 with SKP1 occurs via the F-box domain. Interacts with phosphorylated ubiquitination substrates SMAD3 and SMAD4. Interacts with phosphorylated ubiquitination substrates CTNNB1, NFKBIA, NFKBIB, NFKBIE, NFKB1/nuclear factor NF-kappa-B p105 subunit, ATF4, CDC25A, DLG1, FBXO5 and SNAI1; the interaction requires the phosphorylation of the 2 serine residues in the substrate destruction motif D-S-G-X(2,3,4)-S. Binds UBQLN1. Interacts with CDC34 and UBE2R2. Interacts with FBXW11. Interacts with CUL4A and DDB1. Part of a SCF(BTRC)-like complex lacking CUL1, which is associated with phosphorylated NKBIA and RELA; RELA interacts directly with NFKBIA. Interacts with the phosphorylated form of GLI3. Interacts with CLU. Interacts with PER1 (phosphorylated), PER2 (phosphorylated) and PER3. Interacts with phosphorylated ubiquitination substrate CEP68. Interacts with ZC3H12A; this interaction occurs when ZC3H12A is phosphorylated in a IKBKB/IKKB-dependent manner. Interacts with HSF1; this interaction occurs during mitosis and induces HSF1 ubiquitin-dependent degradation, a process inhibited by CDC20. Interacts with NFE2L1. Interacts with INAVA. Interacts with IL10RA; this interaction leads to IL10RA ubiquitination and subsequent degradation. Interacts with REST. Interacts with KLF4; this interaction leads to KLF4 ubiquitination and subsequent degradation. Interacts with UBR2, as part of a SCF(BTRC) complex; the interaction mediates 'Lys-48'-linked ubiquitination of UBR2 and is regulated by DUSP22 in the T-cell receptor signaling pathway. In terms of processing, ubiquitinated via 'Lys-11'-linked polyubiquitin by some cullin-5-RING E3 ubiquitin-protein ligase complex (ECS complex), leading to its degradation. Deubiquitinated by OTUD5, promoting its stability. As to expression, expressed in heart, brain, liver, skeletal muscle and, most strongly, in testis.

It is found in the cytoplasm. The protein localises to the nucleus. It functions in the pathway protein modification; protein ubiquitination. Its function is as follows. Substrate recognition component of a SCF (SKP1-CUL1-F-box protein) E3 ubiquitin-protein ligase complex which mediates the ubiquitination and subsequent proteasomal degradation of target proteins. Recognizes and binds to phosphorylated target proteins. SCF(BTRC) mediates the ubiquitination of phosphorylated NFKB, ATF4, CDC25A, DLG1, FBXO5, PER1, SMAD3, SMAD4, SNAI1 and probably NFKB2. SCF(BTRC) mediates the ubiquitination of CTNNB1 and participates in Wnt signaling. SCF(BTRC) mediates the ubiquitination of NFKBIA, NFKBIB and NFKBIE; the degradation frees the associated NFKB1 to translocate into the nucleus and to activate transcription. Ubiquitination of NFKBIA occurs at 'Lys-21' and 'Lys-22'. The SCF(FBXW11) complex also regulates NF-kappa-B by mediating ubiquitination of phosphorylated NFKB1: specifically ubiquitinates the p105 form of NFKB1, leading to its degradation. SCF(BTRC) mediates the ubiquitination of CEP68; this is required for centriole separation during mitosis. SCF(BTRC) mediates the ubiquitination and subsequent degradation of nuclear NFE2L1. Has an essential role in the control of the clock-dependent transcription via degradation of phosphorylated PER1 and PER2. May be involved in ubiquitination and subsequent proteasomal degradation through a DBB1-CUL4 E3 ubiquitin-protein ligase. Required for activation of NFKB-mediated transcription by IL1B, MAP3K14, MAP3K1, IKBKB and TNF. Required for proteolytic processing of GLI3. Mediates ubiquitination of REST, thereby leading to its proteasomal degradation. SCF(BTRC) mediates the ubiquitination and subsequent proteasomal degradation of KLF4; thereby negatively regulating cell pluripotency maintenance and embryogenesis. SCF(BTRC) acts as a regulator of mTORC1 signaling pathway by catalyzing ubiquitination and subsequent proteasomal degradation of phosphorylated DEPTOR, TFE3 and MITF. SCF(BTRC) directs 'Lys-48'-linked ubiquitination of UBR2 in the T-cell receptor signaling pathway. The sequence is that of F-box/WD repeat-containing protein 1A from Mus musculus (Mouse).